The primary structure comprises 985 residues: Vacuolar membrane protease (985 aa).

At 1-20 the chain is on the cytoplasmic side; that stretch reads MASSRAQRFNPIAFTPWPVT. The chain crosses the membrane as a helical span at residues 21-41; it reads CITTIVYLALLIPILVINLVV. Residues 42–388 are Vacuolar-facing; that stretch reads PSAPETNPKG…MFGTAFAVFR (347 aa). N53, N116, and N119 each carry an N-linked (GlcNAc...) asparagine glycan. H175 and D187 together coordinate Zn(2+). The Proton acceptor role is filled by E221. Position 222 (E222) interacts with Zn(2+). N-linked (GlcNAc...) asparagine glycosylation occurs at N238. Zn(2+) contacts are provided by E247 and H320. The chain crosses the membrane as a helical span at residues 389–409; that stretch reads LHTLFAISVALLVIAPLVIFV. Residues 410 to 440 are Cytoplasmic-facing; that stretch reads TNRMYLFSMSKSLEGTGDQVSLRGLRGFSRT. A helical membrane pass occupies residues 441 to 461; the sequence is PIILVTATTIPICLAYLLEKV. Topologically, residues 462 to 470 are vacuolar; the sequence is NPYIVHSSQ. Residues 471-491 traverse the membrane as a helical segment; the sequence is FSVWSMMFSAWIFLAWFLACA. Residues 492–502 lie on the Cytoplasmic side of the membrane; the sequence is ADFFRPSALHR. A helical membrane pass occupies residues 503-523; that stretch reads AYSYTWIFIATWIMLVINTVY. Over 524–527 the chain is Vacuolar; that stretch reads ANQK. A helical transmembrane segment spans residues 528–548; that stretch reads GIAAGYFLLFYFAGAFLATWI. Residues 549–666 lie on the Cytoplasmic side of the membrane; the sequence is SYLELFALPR…TLPRWTWVLQ (118 aa). Residues 563 to 612 are disordered; it reads ARQTTGRRPSSLSSRLLTSSADELRSNASPSTAEFPGAAGEDTDPTESTS. Positions 566–582 are enriched in low complexity; that stretch reads TTGRRPSSLSSRLLTSS. The helical transmembrane segment at 667-687 threads the bilayer; the sequence is LLLLAPIVLILVGQLALFLTA. Topologically, residues 688–700 are vacuolar; that stretch reads SMCQVGSDGVSTF. Residues 701–721 traverse the membrane as a helical segment; sequence VVYLACAVFTTLLCIPLFPLI. Residues 722-727 lie on the Cytoplasmic side of the membrane; it reads HRFTYH. The helical transmembrane segment at 728 to 748 threads the bilayer; that stretch reads IPTFLFLVFIGTLIYNLVAFP. The Vacuolar portion of the chain corresponds to 749 to 985; sequence FSPANRLKTF…VEASHSFTIQ (237 aa). Residues N767, N795, and N839 are each glycosylated (N-linked (GlcNAc...) asparagine).

It belongs to the peptidase M28 family. Requires Zn(2+) as cofactor.

The protein resides in the vacuole membrane. Functionally, may be involved in vacuolar sorting and osmoregulation. The chain is Vacuolar membrane protease from Ajellomyces capsulatus (strain G186AR / H82 / ATCC MYA-2454 / RMSCC 2432) (Darling's disease fungus).